An 882-amino-acid polypeptide reads, in one-letter code: MLLGASWLCASKAAAAAAQSEGDEDRPGERRRRRAAATAAGAGEDMDESSLLDLLECSVCLERLDTTAKVLPCQHTFCRRCLESIVCSRHELRCPECRILVGCGVDELPANILLVRLLDGIRQRPRAGTSPGGSPPARPIPGQSAAPTLAGGGGGAAGSTPGSPVFLSAAAGSTAGSLRELATSRTAPAAKNPCLLPYGKALYSYEGKEPGDLKFNKGDIIVLRRKVDEQWYHGELHGTQGFLPASYIQCIQPLPHAPPQGKALYDFEMKDKDQDKDCLTFTKDEILTVLRRVDENWAEGMLGDKIGIFPLLYVELNDSAKQLIEMDKPCPAAASSCNASLPSDSGAVASVAPSPTLSSSGAVSAFQRRVDGKKNTKKRHSFTALSVTHRSSQAASHRHSMEISAPVLISSSDPRAAARIGDLAHLSCAAPTQDVSSSAGSTPTAVPRAASVSGEQGTPPKVQLPLNVYLALYAYKPQKSDELELHKGEMYRVLEKCQDGWFKGASLRTGVSGVFPGNYVTPVSRVPAGGAGPPRNNVVGGSPLAKGITTTMHPGSGSLSSLATATRPALPITTPQAHAQHPTASPPTGSCLRHSAQPTASQARSTISTAAHSAAQAQDRPTATVSPLRTQNSPSRLPATSLRPHSVVSPQHSHQPPVQMCPRPAIPLTSAASAITPPNVSAANLNGEAGGGPIGVLSTSSPTNTGCKLDEKKSEKKEKKSGLLKLLAGASTKKKSRSPPSVSPTHDPQVAVDALLQGAVGPEVSSLSIHGRAGSCPIESEMQGAMGMEPLHRKAGSLDLNFTSPSRQAPLSMAAIRPEPKLLPRERYRVVVSYPPQSEAEIELKEGDIVFVHKKREDGWYKGTLQRNGRTGLFPGSFVESF.

Residues 18–42 are disordered; that stretch reads AQSEGDEDRPGERRRRRAAATAAGA. Residues 57–98 form an RING-type zinc finger; it reads CSVCLERLDTTAKVLPCQHTFCRRCLESIVCSRHELRCPECR. The segment at 124 to 159 is disordered; that stretch reads RPRAGTSPGGSPPARPIPGQSAAPTLAGGGGGAAGS. SH3 domains lie at 194 to 253 and 256 to 319; these read CLLP…CIQP and HAPP…LNDS. The segment at 368-399 is disordered; it reads RRVDGKKNTKKRHSFTALSVTHRSSQAASHRH. Residues 369–439 form an interaction with RAC1 region; the sequence is RVDGKKNTKK…APTQDVSSSA (71 aa). Residue Ser400 is modified to Phosphoserine. Residues 433–444 are compositionally biased toward polar residues; the sequence is QDVSSSAGSTPT. The disordered stretch occupies residues 433–458; sequence QDVSSSAGSTPTAVPRAASVSGEQGT. The region spanning 464–525 is the SH3 3 domain; sequence LPLNVYLALY…PGNYVTPVSR (62 aa). 3 stretches are compositionally biased toward polar residues: residues 575 to 588, 596 to 635, and 697 to 706; these read PQAH…SPPT, AQPT…NSPS, and LSTSSPTNTG. Disordered regions lie at residues 575-664 and 693-747; these read PQAH…CPRP and PIGV…PTHD. Basic and acidic residues predominate over residues 708 to 721; it reads KLDEKKSEKKEKKS. Phosphoserine is present on Ser797. The region spanning 823-882 is the SH3 4 domain; it reads LPRERYRVVVSYPPQSEAEIELKEGDIVFVHKKREDGWYKGTLQRNGRTGLFPGSFVESF.

Belongs to the SH3RF family. As to quaternary structure, interacts (via SH3 domain 3) with PAK2. Interacts with RAC1 (GTP-bound form). Autoubiquitinated.

It catalyses the reaction S-ubiquitinyl-[E2 ubiquitin-conjugating enzyme]-L-cysteine + [acceptor protein]-L-lysine = [E2 ubiquitin-conjugating enzyme]-L-cysteine + N(6)-ubiquitinyl-[acceptor protein]-L-lysine.. The protein operates within protein modification; protein ubiquitination. In terms of biological role, has E3 ubiquitin-protein ligase activity. This Homo sapiens (Human) protein is E3 ubiquitin-protein ligase SH3RF3 (SH3RF3).